A 214-amino-acid chain; its full sequence is Uridine kinase (214 aa).

15–22 (GASASGKS) provides a ligand contact to ATP.

The protein belongs to the uridine kinase family.

Its subcellular location is the cytoplasm. The catalysed reaction is uridine + ATP = UMP + ADP + H(+). It carries out the reaction cytidine + ATP = CMP + ADP + H(+). It functions in the pathway pyrimidine metabolism; CTP biosynthesis via salvage pathway; CTP from cytidine: step 1/3. The protein operates within pyrimidine metabolism; UMP biosynthesis via salvage pathway; UMP from uridine: step 1/1. This Tolumonas auensis (strain DSM 9187 / NBRC 110442 / TA 4) protein is Uridine kinase.